The primary structure comprises 348 residues: Guanosine ABC transporter permease protein NupP (348 aa).

The next 9 membrane-spanning stretches (helical) occupy residues 8–28, 61–81, 85–105, 107–127, 136–156, 189–209, 237–257, 277–297, and 320–340; these read LLVPLIAIILGLAAGALIMLV, YILSGLAVAFAFRTGLFNIGV, LLVGWTAAVWVGTAFDGPAYI, LPLALITAAAAGGLWGFIPGI, EVIVTIMMNYIALHMTNYIIS, LHLGIIVALLAAVIMWFIINK, IMTSMLISGAFAGLAGAMEGL, IAVALLGGNTAVGVVLAACLL, and IVIAIIILFVASSYAIRFVMG.

This sequence belongs to the binding-protein-dependent transport system permease family. The complex is composed of two ATP-binding proteins (NupO), two transmembrane proteins (NupP and NupQ) and a solute-binding protein (NupN).

Its subcellular location is the cell membrane. Its function is as follows. Part of an ABC transporter complex involved in the uptake of guanosine. Responsible for the translocation of the substrate across the membrane. May be a nucleoside transporter of broad specificity but with various affinities for different substrates. The sequence is that of Guanosine ABC transporter permease protein NupP from Bacillus subtilis (strain 168).